Here is a 384-residue protein sequence, read N- to C-terminus: 1-deoxy-D-xylulose 5-phosphate reductoisomerase (384 aa).

The NADPH site is built by T10, G11, S12, I13, G36, N38, and N122. K123 contributes to the 1-deoxy-D-xylulose 5-phosphate binding site. Residue E124 participates in NADPH binding. Residue D148 coordinates Mn(2+). Positions 149, 150, 174, and 197 each coordinate 1-deoxy-D-xylulose 5-phosphate. E150 provides a ligand contact to Mn(2+). G203 provides a ligand contact to NADPH. Residues S210, N215, K216, and E219 each coordinate 1-deoxy-D-xylulose 5-phosphate. E219 serves as a coordination point for Mn(2+).

This sequence belongs to the DXR family. The cofactor is Mg(2+). Mn(2+) is required as a cofactor.

The enzyme catalyses 2-C-methyl-D-erythritol 4-phosphate + NADP(+) = 1-deoxy-D-xylulose 5-phosphate + NADPH + H(+). It participates in isoprenoid biosynthesis; isopentenyl diphosphate biosynthesis via DXP pathway; isopentenyl diphosphate from 1-deoxy-D-xylulose 5-phosphate: step 1/6. Its function is as follows. Catalyzes the NADPH-dependent rearrangement and reduction of 1-deoxy-D-xylulose-5-phosphate (DXP) to 2-C-methyl-D-erythritol 4-phosphate (MEP). In Geotalea daltonii (strain DSM 22248 / JCM 15807 / FRC-32) (Geobacter daltonii), this protein is 1-deoxy-D-xylulose 5-phosphate reductoisomerase.